The primary structure comprises 226 residues: PKHD-type hydroxylase PputW619_4316 (226 aa).

Residues 78–178 (KVFPPLINCY…RYAAFFWTQS (101 aa)) form the Fe2OG dioxygenase domain. The Fe cation site is built by His96, Asp98, and His159. Arg169 contributes to the 2-oxoglutarate binding site.

It depends on Fe(2+) as a cofactor. L-ascorbate serves as cofactor.

The protein is PKHD-type hydroxylase PputW619_4316 of Pseudomonas putida (strain W619).